Reading from the N-terminus, the 561-residue chain is Urocanate hydratase (561 aa).

Residues 52 to 53 (GG), Q130, 176 to 178 (GMG), E196, R201, 242 to 243 (NA), 267 to 271 (QTSAH), 277 to 278 (YL), and Y326 contribute to the NAD(+) site. C414 is an active-site residue. Residue G496 participates in NAD(+) binding.

This sequence belongs to the urocanase family. NAD(+) serves as cofactor.

The protein resides in the cytoplasm. It catalyses the reaction 4-imidazolone-5-propanoate = trans-urocanate + H2O. It participates in amino-acid degradation; L-histidine degradation into L-glutamate; N-formimidoyl-L-glutamate from L-histidine: step 2/3. Functionally, catalyzes the conversion of urocanate to 4-imidazolone-5-propionate. The protein is Urocanate hydratase of Rhizobium rhizogenes (strain K84 / ATCC BAA-868) (Agrobacterium radiobacter).